Consider the following 445-residue polypeptide: FAS-associated factor 2-B (445 aa).

Positions 12–48 constitute a UBA domain; the sequence is DQTEKLLQFQDLTGIESIDQCRQTLQQHNWNIETAVQ. Residues 275-353 adopt a coiled-coil conformation; sequence SERLEREERN…ERKSECLPAE (79 aa). Residues 302–355 are disordered; it reads RADQEKERKKKEKQDQKRREEEEAQRKQMLEERKKRNLEEEKERKSECLPAEPV. A compositionally biased stretch (basic and acidic residues) spans 303–348; it reads ADQEKERKKKEKQDQKRREEEEAQRKQMLEERKKRNLEEEKERKSE. The 83-residue stretch at 357 to 439 folds into the UBX domain; the sequence is DHPDNVKIIF…GLSQSQLLFV (83 aa).

It is found in the cytoplasm. It localises to the lipid droplet. The protein resides in the endoplasmic reticulum. In terms of biological role, plays an important role in endoplasmic reticulum-associated degradation (ERAD) that mediates ubiquitin-dependent degradation of misfolded endoplasmic reticulum proteins. Involved in inhibition of lipid droplet degradation. Involved in stress granule disassembly. The protein is FAS-associated factor 2-B (faf2-b) of Xenopus laevis (African clawed frog).